The sequence spans 356 residues: Anthranilate phosphoribosyltransferase (356 aa).

Residues glycine 96, 99–100, threonine 104, 106–109, 124–132, and serine 136 each bind 5-phospho-alpha-D-ribose 1-diphosphate; these read GD, NIST, and KHGNRSASG. Glycine 96 provides a ligand contact to anthranilate. Mg(2+) is bound at residue serine 108. Position 127 (asparagine 127) interacts with anthranilate. Anthranilate is bound at residue arginine 182. Aspartate 241 and glutamate 242 together coordinate Mg(2+).

This sequence belongs to the anthranilate phosphoribosyltransferase family. As to quaternary structure, homodimer. Requires Mg(2+) as cofactor.

The catalysed reaction is N-(5-phospho-beta-D-ribosyl)anthranilate + diphosphate = 5-phospho-alpha-D-ribose 1-diphosphate + anthranilate. The protein operates within amino-acid biosynthesis; L-tryptophan biosynthesis; L-tryptophan from chorismate: step 2/5. Its function is as follows. Catalyzes the transfer of the phosphoribosyl group of 5-phosphorylribose-1-pyrophosphate (PRPP) to anthranilate to yield N-(5'-phosphoribosyl)-anthranilate (PRA). In Trichodesmium erythraeum (strain IMS101), this protein is Anthranilate phosphoribosyltransferase.